A 428-amino-acid chain; its full sequence is Anaerobic glycerol-3-phosphate dehydrogenase subunit B (428 aa).

This sequence belongs to the anaerobic G-3-P dehydrogenase subunit B family. In terms of assembly, composed of a catalytic GlpA/B dimer and of membrane bound GlpC. FMN is required as a cofactor.

It carries out the reaction a quinone + sn-glycerol 3-phosphate = dihydroxyacetone phosphate + a quinol. It participates in polyol metabolism; glycerol degradation via glycerol kinase pathway; glycerone phosphate from sn-glycerol 3-phosphate (anaerobic route): step 1/1. In terms of biological role, conversion of glycerol 3-phosphate to dihydroxyacetone. Uses fumarate or nitrate as electron acceptor. This Pasteurella multocida (strain Pm70) protein is Anaerobic glycerol-3-phosphate dehydrogenase subunit B.